The primary structure comprises 287 residues: 4-diphosphocytidyl-2-C-methyl-D-erythritol kinase (287 aa).

K14 is an active-site residue. 96 to 106 (PWGAGLGGGSS) contacts ATP. D138 is a catalytic residue.

It belongs to the GHMP kinase family. IspE subfamily.

It carries out the reaction 4-CDP-2-C-methyl-D-erythritol + ATP = 4-CDP-2-C-methyl-D-erythritol 2-phosphate + ADP + H(+). It functions in the pathway isoprenoid biosynthesis; isopentenyl diphosphate biosynthesis via DXP pathway; isopentenyl diphosphate from 1-deoxy-D-xylulose 5-phosphate: step 3/6. Functionally, catalyzes the phosphorylation of the position 2 hydroxy group of 4-diphosphocytidyl-2C-methyl-D-erythritol. The protein is 4-diphosphocytidyl-2-C-methyl-D-erythritol kinase of Methylibium petroleiphilum (strain ATCC BAA-1232 / LMG 22953 / PM1).